The chain runs to 138 residues: ATP synthase epsilon chain (138 aa).

Residues 89–114 are compositionally biased toward basic and acidic residues; the sequence is KDTAQQEWNEAQKRLDEASKSGDRQK. A disordered region spans residues 89–117; the sequence is KDTAQQEWNEAQKRLDEASKSGDRQKQIQ.

This sequence belongs to the ATPase epsilon chain family. As to quaternary structure, F-type ATPases have 2 components, CF(1) - the catalytic core - and CF(0) - the membrane proton channel. CF(1) has five subunits: alpha(3), beta(3), gamma(1), delta(1), epsilon(1). CF(0) has three main subunits: a, b and c.

Its subcellular location is the cellular thylakoid membrane. Its function is as follows. Produces ATP from ADP in the presence of a proton gradient across the membrane. This is ATP synthase epsilon chain from Gloeothece citriformis (strain PCC 7424) (Cyanothece sp. (strain PCC 7424)).